The chain runs to 444 residues: 23S rRNA (uracil(1939)-C(5))-methyltransferase RlmD (444 aa).

The region spanning 5–67 is the TRAM domain; the sequence is RNRFDRTPFQ…RHFDEAKTVE (63 aa). Residues Cys-80, Cys-86, Cys-89, and Cys-168 each contribute to the [4Fe-4S] cluster site. Positions 276, 305, 310, 326, 353, and 374 each coordinate S-adenosyl-L-methionine. Cys-400 serves as the catalytic Nucleophile.

It belongs to the class I-like SAM-binding methyltransferase superfamily. RNA M5U methyltransferase family. RlmD subfamily.

The enzyme catalyses uridine(1939) in 23S rRNA + S-adenosyl-L-methionine = 5-methyluridine(1939) in 23S rRNA + S-adenosyl-L-homocysteine + H(+). Catalyzes the formation of 5-methyl-uridine at position 1939 (m5U1939) in 23S rRNA. The sequence is that of 23S rRNA (uracil(1939)-C(5))-methyltransferase RlmD from Xanthomonas campestris pv. campestris (strain 8004).